Reading from the N-terminus, the 194-residue chain is ATP-dependent Clp protease proteolytic subunit (194 aa).

Serine 99 acts as the Nucleophile in catalysis. Residue histidine 124 is part of the active site.

This sequence belongs to the peptidase S14 family. Fourteen ClpP subunits assemble into 2 heptameric rings which stack back to back to give a disk-like structure with a central cavity, resembling the structure of eukaryotic proteasomes.

The protein localises to the cytoplasm. The enzyme catalyses Hydrolysis of proteins to small peptides in the presence of ATP and magnesium. alpha-casein is the usual test substrate. In the absence of ATP, only oligopeptides shorter than five residues are hydrolyzed (such as succinyl-Leu-Tyr-|-NHMec, and Leu-Tyr-Leu-|-Tyr-Trp, in which cleavage of the -Tyr-|-Leu- and -Tyr-|-Trp bonds also occurs).. Functionally, cleaves peptides in various proteins in a process that requires ATP hydrolysis. Has a chymotrypsin-like activity. Plays a major role in the degradation of misfolded proteins. The protein is ATP-dependent Clp protease proteolytic subunit of Clostridium perfringens (strain ATCC 13124 / DSM 756 / JCM 1290 / NCIMB 6125 / NCTC 8237 / Type A).